Here is a 109-residue protein sequence, read N- to C-terminus: Nucleoid-associated protein Sbal223_1770 (109 aa).

Belongs to the YbaB/EbfC family. As to quaternary structure, homodimer.

It is found in the cytoplasm. It localises to the nucleoid. Its function is as follows. Binds to DNA and alters its conformation. May be involved in regulation of gene expression, nucleoid organization and DNA protection. The polypeptide is Nucleoid-associated protein Sbal223_1770 (Shewanella baltica (strain OS223)).